The primary structure comprises 656 residues: Heparan-alpha-glucosaminide N-acetyltransferase (656 aa).

Positions 1-31 are disordered; sequence MTGGSSSRRRRAEERSSAAGTERNSRREAVG. Residues 1–185 lie on the Lumenal, vesicle side of the membrane; that stretch reads MTGGSSSRRR…IIVNENPVDS (185 aa). N-linked (GlcNAc...) asparagine glycans are attached at residues N137 and N157. A disulfide bridge connects residues C146 and C455. Residues 186–206 traverse the membrane as a helical segment; the sequence is NLPVSIAFLVGLALIVAVSLL. At 207–268 the chain is on the cytoplasmic side; it reads RLLLSLDDVN…NRLRCVDTFR (62 aa). The disordered stretch occupies residues 234–253; sequence SELGSPSRADPLSADYQPET. Phosphoserine is present on residues S238 and S240. Y249 carries the post-translational modification Phosphotyrosine. A helical membrane pass occupies residues 269-289; it reads GLALVLMVFVNYGGGKYWYFK. The active site involves H290. The Lumenal, vesicle segment spans residues 290–295; that stretch reads HSSWNG. Residues 296 to 316 traverse the membrane as a helical segment; sequence LTVADLVFPWFVFIMGTSIFL. At 317–338 the chain is on the cytoplasmic side; that stretch reads SMTSILQRGCSKLKLLGKIVWR. Residues 339-359 traverse the membrane as a helical segment; it reads SFLLICIGVIIVNPNYCLGPL. Topologically, residues 360-367 are lumenal, vesicle; sequence SWDKVRIP. Residues 368 to 388 traverse the membrane as a helical segment; the sequence is GVLQRLGVTYFVVAVLEFFFW. Residues 389 to 413 lie on the Cytoplasmic side of the membrane; the sequence is KPVPDSCTLESSCFSLRDITSSWPQ. Residues 414-434 traverse the membrane as a helical segment; the sequence is WLTILTLESIWLALTFFLPVP. Residues 435 to 493 lie on the Lumenal, vesicle side of the membrane; the sequence is GCPTGYLGPGGIGDLGKYPHCTGGAAGYIDRLLLGDNHLYQHPSSTVLYHTEVAYDPEG. The chain crosses the membrane as a helical span at residues 494-514; that stretch reads VLGTINSIVMAFLGVQAGKIL. Over 515 to 522 the chain is Cytoplasmic; the sequence is VYYKDQTK. The helical transmembrane segment at 523 to 543 threads the bilayer; it reads AILTRFAAWCCILGLISIVLT. Topologically, residues 544–557 are lumenal, vesicle; it reads KVSANEGFIPINKN. The helical transmembrane segment at 558-578 threads the bilayer; the sequence is LWSISYVTTLSCFAFFILLIL. Over 579 to 585 the chain is Cytoplasmic; sequence YPVVDVK. The helical transmembrane segment at 586 to 606 threads the bilayer; it reads GLWTGTPFFYPGMNSILVYVG. At 607–627 the chain is on the lumenal, vesicle side; that stretch reads HEVLENYFPFQWKLADEQSHK. The chain crosses the membrane as a helical span at residues 628–648; that stretch reads EHLIQNIVATALWVLIAYVLY. The tract at residues 641–656 is lysosomal targeting region; it reads VLIAYVLYKKKLFWKI. The Cytoplasmic segment spans residues 649-656; it reads KKKLFWKI.

Homooligomer. Homooligomerization is necessary for enzyme activity. Undergoes intralysosomal proteolytic cleavage; occurs within the end of the first and/or the beginning of the second luminal domain and is essential for the activation of the enzyme. In terms of processing, glycosylated. As to expression, expressed in the retina.

The protein localises to the lysosome membrane. It catalyses the reaction alpha-D-glucosaminyl-[heparan sulfate](n) + acetyl-CoA = N-acetyl-alpha-D-glucosaminyl-[heparan sulfate](n) + CoA + H(+). Functionally, lysosomal acetyltransferase that acetylates the non-reducing terminal alpha-glucosamine residue of intralysosomal heparin or heparan sulfate, converting it into a substrate for luminal alpha-N-acetyl glucosaminidase. In Mus musculus (Mouse), this protein is Heparan-alpha-glucosaminide N-acetyltransferase (Hgsnat).